The sequence spans 115 residues: Large ribosomal subunit protein bL19 (115 aa).

This sequence belongs to the bacterial ribosomal protein bL19 family.

This protein is located at the 30S-50S ribosomal subunit interface and may play a role in the structure and function of the aminoacyl-tRNA binding site. In Pectobacterium carotovorum subsp. carotovorum (strain PC1), this protein is Large ribosomal subunit protein bL19.